Reading from the N-terminus, the 341-residue chain is tRNA N6-adenosine threonylcarbamoyltransferase (341 aa).

His-115 and His-119 together coordinate Fe cation. Substrate contacts are provided by residues 137 to 141, Asp-170, Gly-183, Asp-187, and Asn-276; that span reads IVSGG. Residue Asp-304 participates in Fe cation binding.

The protein belongs to the KAE1 / TsaD family. Fe(2+) is required as a cofactor.

Its subcellular location is the cytoplasm. The enzyme catalyses L-threonylcarbamoyladenylate + adenosine(37) in tRNA = N(6)-L-threonylcarbamoyladenosine(37) in tRNA + AMP + H(+). In terms of biological role, required for the formation of a threonylcarbamoyl group on adenosine at position 37 (t(6)A37) in tRNAs that read codons beginning with adenine. Is involved in the transfer of the threonylcarbamoyl moiety of threonylcarbamoyl-AMP (TC-AMP) to the N6 group of A37, together with TsaE and TsaB. TsaD likely plays a direct catalytic role in this reaction. This Staphylococcus aureus (strain MRSA252) protein is tRNA N6-adenosine threonylcarbamoyltransferase.